The sequence spans 142 residues: MKTFTAKPSNIKREWLLIDATDKTLGRLATEVAMILRGKNKPEYTPHMDTGDYVVIVNAEKVAVTGNKRKAKTYYHHTGYIGGIKSVSFEKLIATHPERAIEKAVRGMLPRTPLGRTMFKKLKVYAGEAHPHTAQQPKAHNI.

This sequence belongs to the universal ribosomal protein uL13 family. Part of the 50S ribosomal subunit.

Functionally, this protein is one of the early assembly proteins of the 50S ribosomal subunit, although it is not seen to bind rRNA by itself. It is important during the early stages of 50S assembly. The protein is Large ribosomal subunit protein uL13 of Francisella tularensis subsp. mediasiatica (strain FSC147).